We begin with the raw amino-acid sequence, 585 residues long: MLVAAFFTLFLVTCQPAVTAQEKVNQRVNRAATPRAFDCQLSSWSEWTDCFPCQDTKYRHRSLLQPNKFGGTICSGDIWDRASCYSPTACLRPAQCGQDFQCKETGRCLKRHLVCNGENDCLDGSDEDNCEDIRATESDCAQYDPIPGSEKAALGYNILTQEEAQSVYDARYYGGRCETVYNGEWRHVRYDPVCERLHHGEDDKYFRKPYNFLKYHFEARADTGISFELYVDGNDLFSKVKNDKSHSAGVTISAGLTGSPLLGTVGVSGSEDASFLNKLSQYNEKKYNFMRIFTKVQTAHFKMRRDDIVLDEGMLQALVELPEQYNYGMYSKFINDYGTHYITSGSMGGTYEYILVLNTEKMESLGVTSEDISSCFGGFGEIQYEKGKINAQGILSGKHCKKSGSGDKEADKMGQAVKDIISRVRGGSSGWGGGLSQNGSATTYRFWGRSLKYNPVVIDFEMQPIHEVLLHTNLGHVEAKRQNLRRALDQYLMEFNACRCGPCFNNGKPILEGTSCRCQCSLGLQGPACEQTEQQGAKADGHWSCWGSWSPCTAGTRERRRECNNPAPQNGGAPCPGWRVQTQAC.

Residues 1–20 (MLVAAFFTLFLVTCQPAVTA) form the signal peptide. Positions 21 to 30 (QEKVNQRVNR) are excised as a propeptide. The 54-residue stretch at 38–91 (DCQLSSWSEWTDCFPCQDTKYRHRSLLQPNKFGGTICSGDIWDRASCYSPTACL) folds into the TSP type-1 1 domain. 7 disulfides stabilise this stretch: cysteine 39–cysteine 74, cysteine 50–cysteine 84, cysteine 53–cysteine 90, cysteine 96–cysteine 108, cysteine 102–cysteine 121, cysteine 115–cysteine 130, and cysteine 140–cysteine 177. A C-linked (Man) tryptophan glycan is attached at tryptophan 44. The LDL-receptor class A domain occupies 94–132 (AQCGQDFQCKETGRCLKRHLVCNGENDCLDGSDEDNCED). Residues leucine 113, asparagine 116, glutamate 118, aspartate 120, aspartate 126, and glutamate 127 each coordinate Ca(2+). The region spanning 136 to 499 (TESDCAQYDP…QYLMEFNACR (364 aa)) is the MACPF domain. The next 4 beta stranded transmembrane spans lie at 248 to 256 (AGVTISAGL), 259 to 266 (SPLLGTVG), 377 to 384 (GGFGEIQY), and 391 to 396 (AQGILS). A disulfide bridge links cysteine 375 with cysteine 400. Asparagine 438 is a glycosylation site (N-linked (GlcNAc...) asparagine). 4 cysteine pairs are disulfide-bonded: cysteine 498–cysteine 545, cysteine 500–cysteine 516, cysteine 503–cysteine 518, and cysteine 520–cysteine 529. An EGF-like domain is found at 499–530 (RCGPCFNNGKPILEGTSCRCQCSLGLQGPACE). One can recognise a TSP type-1 2 domain in the interval 540–584 (DGHWSCWGSWSPCTAGTRERRRECNNPAPQNGGAPCPGWRVQTQA). 3 C-linked (Man) tryptophan glycosylation sites follow: tryptophan 543, tryptophan 546, and tryptophan 549. Disulfide bonds link cysteine 552-cysteine 585 and cysteine 563-cysteine 575.

It belongs to the complement C6/C7/C8/C9 family. As to quaternary structure, heterotrimer of 3 chains: alpha (C8A), beta (C8B) and gamma (C8G); the alpha and gamma chains are disulfide bonded. Component of the membrane attack complex (MAC), composed of complement C5b, C6, C7, C8A, C8B, C8G and multiple copies of the pore-forming subunit C9.

The protein resides in the secreted. Its subcellular location is the target cell membrane. Membrane attack complex (MAC) assembly is inhibited by CD59, thereby protecting self-cells from damage during complement activation. CD59 acts by binding to the beta-haipins of C8 (C8A and C8B), forming an intermolecular beta-sheet that prevents incorporation of the multiple copies of C9 required for complete formation of the osmolytic pore. MAC assembly is also inhibited by clusterin (CLU) chaperones that inhibit polymerization of C9. Functionally, component of the membrane attack complex (MAC), a multiprotein complex activated by the complement cascade, which inserts into a target cell membrane and forms a pore, leading to target cell membrane rupture and cell lysis. The MAC is initiated by proteolytic cleavage of C5 into complement C5b in response to the classical, alternative, lectin and GZMK complement pathways. The complement pathways consist in a cascade of proteins that leads to phagocytosis and breakdown of pathogens and signaling that strengthens the adaptive immune system. C8A, together with C8B and C8G, inserts into the target membrane, but does not form pores by itself. During MAC assembly, associates with C5b, C6 and C7 to form the C5b8 intermediate complex that inserts into the target membrane and traverses the bilayer increasing membrane rigidity. The polypeptide is Complement component C8 alpha chain (C8A) (Oryctolagus cuniculus (Rabbit)).